The primary structure comprises 339 residues: MVSSQPKYDLIREVGRGSYGVVYEALVRRTSQRVAVKKIRCQAPENVELALREFWALSSIQSQHPNVIHMEECVLQKDGMVQRMLHGSSSVLYLPLVETSLKGEIAFDPRSIYCLWFVMDFCDGGDMNEYILTRRPSRRTNTSFMLQLSSALAFLHKNQIIHRDLKPDNILVCKSRDGVDEPTLKVADFGLSKVCSSSGLNPEEPANVNKSFLSTACGTDFYMAPEVWEGHYTAKADIFALGVILWAMLERITITDTHTKKRLLGGYVQRGAQVVPVGEALLENPKLELLIPVKKKSMNRRMKQLLHQMLSANPQERPDAFQLELKLIQIAFRDYTWET.

The region spanning 8 to 332 (YDLIREVGRG…LELKLIQIAF (325 aa)) is the Protein kinase domain. Residues 14–22 (VGRGSYGVV) and lysine 37 each bind ATP. Aspartate 164 serves as the catalytic Proton acceptor.

It belongs to the protein kinase superfamily. Ser/Thr protein kinase family.

Its subcellular location is the nucleus. It catalyses the reaction L-seryl-[protein] + ATP = O-phospho-L-seryl-[protein] + ADP + H(+). The enzyme catalyses L-threonyl-[protein] + ATP = O-phospho-L-threonyl-[protein] + ADP + H(+). The protein is Serine/threonine-protein kinase pdik1l-A (pdik1-a) of Xenopus laevis (African clawed frog).